We begin with the raw amino-acid sequence, 505 residues long: ATP synthase subunit alpha (505 aa).

Residue 170–177 participates in ATP binding; it reads GDRQTGKS.

It belongs to the ATPase alpha/beta chains family. As to quaternary structure, F-type ATPases have 2 components, CF(1) - the catalytic core - and CF(0) - the membrane proton channel. CF(1) has five subunits: alpha(3), beta(3), gamma(1), delta(1), epsilon(1). CF(0) has four main subunits: a(1), b(1), b'(1) and c(9-12).

It is found in the cellular thylakoid membrane. The catalysed reaction is ATP + H2O + 4 H(+)(in) = ADP + phosphate + 5 H(+)(out). Its function is as follows. Produces ATP from ADP in the presence of a proton gradient across the membrane. The alpha chain is a regulatory subunit. This Prochlorococcus marinus (strain MIT 9312) protein is ATP synthase subunit alpha.